The following is a 334-amino-acid chain: Rhomboid-like protein 14, mitochondrial (334 aa).

A mitochondrion-targeting transit peptide spans 1 to 87 (MENFGEGRRS…RLFLSAFYHV (87 aa)). 4 consecutive transmembrane segments (helical) span residues 114–134 (EFAS…LLLA), 146–166 (AYYN…KVVL), 176–196 (VYGI…LVQM), and 197–217 (FVPN…IIYL). Catalysis depends on serine 156, which acts as the Nucleophile. The active-site Charge relay system is the histidine 206. Residues 273-302 (GPGIWRCQSCTYDNSGWLSACEMCGSGRAR) form a RanBP2-type zinc finger.

This sequence belongs to the peptidase S54 family.

It localises to the mitochondrion membrane. Its function is as follows. Probable rhomboid-type serine protease that catalyzes intramembrane proteolysis. May function in the heat-shock response pathway. The sequence is that of Rhomboid-like protein 14, mitochondrial from Arabidopsis thaliana (Mouse-ear cress).